Reading from the N-terminus, the 247-residue chain is MyoD family inhibitor domain-containing protein (247 aa).

Disordered regions lie at residues 1-67 (MSCA…NPSA) and 80-110 (QLQTSAQEPGKEETGKIKNGGHTRMSNGNGI). Residues 74-247 (QPERLPQLQT…MECCGICFPS (174 aa)) form the MDFI domain. Phosphoserine occurs at positions 129 and 141.

The protein belongs to the MDFI family. As to quaternary structure, interacts with HAND1; the interaction sequesters Hand1 into the nucleolus and inhibits its activity. Interacts (via C-terminus) with ZIC2. Interacts (via C-terminus) with AXIN1, the histidine-rich region of CCNT1/cyclin-T and weakly with LEF1. Interacts with CCNT2. Interacts with GATA2. Interacts (via C-terminus) with Piezo channel composed of PIEZO1 or PIEZO2; the interaction prolongs Piezo channel inactivation. Post-translationally, palmitoylated. In the embryo, robust expression is detected between 16.5 and 18.5 dpc in lung, kidney, and salivary glands. In the developing cardiovascular system, it is detected in lymphatic and cardiac valves (at protein level).

It is found in the cytoplasm. It localises to the secreted. Its function is as follows. Required to control the activity of various transcription factors through their sequestration in the cytoplasm. Retains nuclear Zic proteins ZIC1, ZIC2 and ZIC3 in the cytoplasm and inhibits their transcriptional activation. Modulates the expression from cellular promoters. Binds to the axin complex, resulting in an increase in the level of free beta-catenin. Affects axin-regulation of the WNT and JNK signaling pathways. Involved in the development of lymphatic vessel valves. Required to promote lymphatic endothelial cell migration, in a process that involves down-regulation of integrin beta 1 activation and control of cell adhesion to the extracellular matrix. Regulates the activity of mechanosensitive Piezo channel. The protein is MyoD family inhibitor domain-containing protein of Mus musculus (Mouse).